Consider the following 233-residue polypeptide: Counting factor-associated protein A (233 aa).

Residues 1–21 (MKLLNSLILLVLTCLVSSINT) form the signal peptide. 2 N-linked (GlcNAc...) asparagine glycosylation sites follow: Asn37 and Asn189.

The protein resides in the secreted. The protein is Counting factor-associated protein A (cfaA) of Dictyostelium discoideum (Social amoeba).